We begin with the raw amino-acid sequence, 207 residues long: Superoxide dismutase [Fe] (207 aa).

Residues His-28, His-76, Asp-160, and His-164 each coordinate Fe cation.

It belongs to the iron/manganese superoxide dismutase family. As to quaternary structure, homotetramer. The cofactor is Fe cation.

The protein localises to the secreted. It carries out the reaction 2 superoxide + 2 H(+) = H2O2 + O2. Destroys superoxide anion radicals which are normally produced within the cells and which are toxic to biological systems. This chain is Superoxide dismutase [Fe] (sodB), found in Mycobacterium tuberculosis (strain CDC 1551 / Oshkosh).